We begin with the raw amino-acid sequence, 241 residues long: Ribosomal RNA small subunit methyltransferase J (241 aa).

S-adenosyl-L-methionine is bound by residues 94–95 and Asp163; that span reads RD.

The protein belongs to the methyltransferase superfamily. RsmJ family.

The protein localises to the cytoplasm. It carries out the reaction guanosine(1516) in 16S rRNA + S-adenosyl-L-methionine = N(2)-methylguanosine(1516) in 16S rRNA + S-adenosyl-L-homocysteine + H(+). Its function is as follows. Specifically methylates the guanosine in position 1516 of 16S rRNA. In Francisella tularensis subsp. tularensis (strain FSC 198), this protein is Ribosomal RNA small subunit methyltransferase J.